We begin with the raw amino-acid sequence, 264 residues long: S-adenosylmethionine decarboxylase proenzyme (264 aa).

The active-site Schiff-base intermediate with substrate; via pyruvic acid is Ser113. Ser113 carries the pyruvic acid (Ser); by autocatalysis modification. The Proton acceptor; for processing activity role is filled by His118. Cys141 acts as the Proton donor; for catalytic activity in catalysis.

This sequence belongs to the prokaryotic AdoMetDC family. Type 2 subfamily. Heterooctamer of four alpha and four beta chains arranged as a tetramer of alpha/beta heterodimers. The cofactor is pyruvate. Post-translationally, is synthesized initially as an inactive proenzyme. Formation of the active enzyme involves a self-maturation process in which the active site pyruvoyl group is generated from an internal serine residue via an autocatalytic post-translational modification. Two non-identical subunits are generated from the proenzyme in this reaction, and the pyruvate is formed at the N-terminus of the alpha chain, which is derived from the carboxyl end of the proenzyme. The post-translation cleavage follows an unusual pathway, termed non-hydrolytic serinolysis, in which the side chain hydroxyl group of the serine supplies its oxygen atom to form the C-terminus of the beta chain, while the remainder of the serine residue undergoes an oxidative deamination to produce ammonia and the pyruvoyl group blocking the N-terminus of the alpha chain.

It catalyses the reaction S-adenosyl-L-methionine + H(+) = S-adenosyl 3-(methylsulfanyl)propylamine + CO2. It participates in amine and polyamine biosynthesis; S-adenosylmethioninamine biosynthesis; S-adenosylmethioninamine from S-adenosyl-L-methionine: step 1/1. Functionally, catalyzes the decarboxylation of S-adenosylmethionine to S-adenosylmethioninamine (dcAdoMet), the propylamine donor required for the synthesis of the polyamines spermine and spermidine from the diamine putrescine. The sequence is that of S-adenosylmethionine decarboxylase proenzyme from Xanthomonas oryzae pv. oryzae (strain MAFF 311018).